We begin with the raw amino-acid sequence, 32 residues long: U3-ctenitoxin-Pk1a (32 aa).

Cystine bridges form between Cys-3–Cys-17, Cys-10–Cys-21, and Cys-16–Cys-30.

Belongs to the neurotoxin 17 (21C2) family. In terms of tissue distribution, expressed by the venom gland.

Its subcellular location is the secreted. May act as a neurotoxin. The polypeptide is U3-ctenitoxin-Pk1a (Phoneutria keyserlingi (Brazilian wandering spider)).